We begin with the raw amino-acid sequence, 362 residues long: METTVRKQKKNVETKKPSIYSLQIHEMQDWLKEQGEPKFRAGQIFDWLYKKRVKNYEDMSNLSKGLRDKLSNSFDITTLNTLVKQTSSDGTIKFLFQLYDGYSIETVLMRHEYGNSICVTTQVGCRIGCTFCASTLGGLKRNLEAGEIVAQVVEVQRALDETEERVSSLVVMGIGEPFDNYDNLMGFLRITNHEKGLHIGARHMTVSTSGIIPKIYKFAEEELQINFAISLHAPNSELRSKLMPINRAYKLPDLMEAIKYYVNRTGRRITFEYGLFGGENDQVEHAEELAALLKGVKCHVNLIPVNYVPERDYVRTPREQIFLFEKTLKDRGVNVTIRREQGHDIDAACGQLRAKERKEETR.

The active-site Proton acceptor is the Glu-105. One can recognise a Radical SAM core domain in the interval 111-344; it reads HEYGNSICVT…VTIRREQGHD (234 aa). Cysteines 118 and 349 form a disulfide. Residues Cys-125, Cys-129, and Cys-132 each coordinate [4Fe-4S] cluster. S-adenosyl-L-methionine contacts are provided by residues 175–176, Ser-207, 230–232, and Asn-306; these read GE and SLH. The active-site S-methylcysteine intermediate is Cys-349.

Belongs to the radical SAM superfamily. RlmN family. The cofactor is [4Fe-4S] cluster.

It is found in the cytoplasm. It carries out the reaction adenosine(2503) in 23S rRNA + 2 reduced [2Fe-2S]-[ferredoxin] + 2 S-adenosyl-L-methionine = 2-methyladenosine(2503) in 23S rRNA + 5'-deoxyadenosine + L-methionine + 2 oxidized [2Fe-2S]-[ferredoxin] + S-adenosyl-L-homocysteine. It catalyses the reaction adenosine(37) in tRNA + 2 reduced [2Fe-2S]-[ferredoxin] + 2 S-adenosyl-L-methionine = 2-methyladenosine(37) in tRNA + 5'-deoxyadenosine + L-methionine + 2 oxidized [2Fe-2S]-[ferredoxin] + S-adenosyl-L-homocysteine. Its function is as follows. Specifically methylates position 2 of adenine 2503 in 23S rRNA and position 2 of adenine 37 in tRNAs. This Bacillus cereus (strain G9842) protein is Probable dual-specificity RNA methyltransferase RlmN.